A 766-amino-acid polypeptide reads, in one-letter code: Sucrose synthase (766 aa).

Residues 220-698 are GT-B glycosyltransferase; the sequence is MVFNVVILSV…GLLRIKERYT (479 aa).

Belongs to the glycosyltransferase 1 family. Plant sucrose synthase subfamily. In terms of tissue distribution, expressed most predominantly in tap root.

It carries out the reaction an NDP-alpha-D-glucose + D-fructose = a ribonucleoside 5'-diphosphate + sucrose + H(+). Sucrose-cleaving enzyme that provides UDP-glucose and fructose for various metabolic pathways. The polypeptide is Sucrose synthase (SS1) (Beta vulgaris (Sugar beet)).